The primary structure comprises 463 residues: Phosphomannomutase/phosphoglucomutase (463 aa).

S108 acts as the Phosphoserine intermediate in catalysis. S108, D242, D244, and D246 together coordinate Mg(2+). Residues E325, S327, and H329 each contribute to the substrate site.

It belongs to the phosphohexose mutase family. As to quaternary structure, monomer. It depends on Mg(2+) as a cofactor.

It catalyses the reaction alpha-D-mannose 1-phosphate = D-mannose 6-phosphate. It carries out the reaction alpha-D-glucose 1-phosphate = alpha-D-glucose 6-phosphate. It functions in the pathway nucleotide-sugar biosynthesis; GDP-alpha-D-mannose biosynthesis; alpha-D-mannose 1-phosphate from D-fructose 6-phosphate: step 2/2. Its pathway is bacterial outer membrane biogenesis; lipopolysaccharide biosynthesis. The phosphomannomutase activity produces a precursor for alginate polymerization. The alginate layer causes a mucoid phenotype and provides a protective barrier against host immune defenses and antibiotics. Also involved in core-LPS biosynthesis due to its phosphoglucomutase activity. Essential for biofilm production. The protein is Phosphomannomutase/phosphoglucomutase (algC) of Pseudomonas putida (strain ATCC 47054 / DSM 6125 / CFBP 8728 / NCIMB 11950 / KT2440).